Reading from the N-terminus, the 685-residue chain is Putative mannosyltransferase YycA (685 aa).

Transmembrane regions (helical) follow at residues 6–26, 68–88, 109–129, 154–174, 176–196, and 204–224; these read FDAALILILLAAAFLNTYHIW, VLWIQTIFALIFGVHTWSVII, FGVGAARIAALVMALTPIAVA, AVKQGKLVWLLTAFALIGLAF, MKMMQAFMVLPAFVLFYLIAS, and IGSLLLSLVLLTGLSLSWAIA. The tract at residues 269 to 347 is disordered; it reads MNAAGGGNMQ…GGGGGKSVNM (79 aa). Over residues 277 to 286 the composition is skewed to polar residues; it reads MQNQDNMQAP. Positions 287–303 are enriched in low complexity; the sequence is NGNGSSFSQNGNQSFGN. Over residues 318–343 the composition is skewed to gly residues; that stretch reads LNGGGGTPPTGGNGPGNGGPGGGGGK. Helical transmembrane passes span 363 to 383, 399 to 419, 422 to 442, 455 to 475, 479 to 499, 513 to 533, and 573 to 593; these read LSGQISWMLPFSLIGLLGAII, TLFWAAWLVPVAGFFSIAGFF, YYLIMLAPPIAALSGIGWYTM, YLLPAAVLITAVFQVYILSAY, IGSVWMYVLGLLGLGITLALL, IISLCVLLLTPVYWSATPLLY, and TGEEYLFATLTTVTAAPYIIY. Residues 652-685 are disordered; sequence TSDEYSGSSSSTNSVQGMRRGPGGESQQTLYLVE. Residues 654 to 665 are compositionally biased toward low complexity; the sequence is DEYSGSSSSTNS. Residues 676–685 are compositionally biased toward polar residues; sequence ESQQTLYLVE.

This sequence belongs to the glycosyltransferase 39 family.

The protein resides in the cell membrane. This is Putative mannosyltransferase YycA (yycA) from Bacillus subtilis (strain 168).